A 536-amino-acid polypeptide reads, in one-letter code: Probable monofunctional riboflavin biosynthesis protein RIBA 3, chloroplastic (536 aa).

The N-terminal 43 residues, 1–43 (MDRVLLSSQLSSQTVVNTRVQQGSGGINSIGFAVIRKGSLKLR), are a transit peptide targeting the chloroplast. An inactive DHBP synthase region spans residues 44 to 310 (CYAIGGLGGG…IADLIRYRRK (267 aa)). Residues 133–134 (GD), Asp138, and 248–252 (RAGHT) contribute to the D-ribulose 5-phosphate site. Positions 311–536 (REKLVELIAV…GDQDEDDTHN (226 aa)) are GTP cyclohydrolase II. 361–365 (RVHSE) provides a ligand contact to GTP. Residues Cys366, Cys377, and Cys379 each coordinate Zn(2+). GTP contacts are provided by residues Gln382, 405–407 (EGR), and Thr427. The active-site Proton acceptor; for GTP cyclohydrolase activity is the Asp439. Residue Arg441 is the Nucleophile; for GTP cyclohydrolase activity of the active site. 2 residues coordinate GTP: Thr462 and Lys467. The tract at residues 507-536 (YGSDLPGNVPEEFLNPDDIAGDQDEDDTHN) is disordered. Acidic residues predominate over residues 525-536 (IAGDQDEDDTHN).

In the N-terminal section; belongs to the DHBP synthase family. It in the C-terminal section; belongs to the GTP cyclohydrolase II family. Requires Zn(2+) as cofactor.

The protein localises to the plastid. The protein resides in the chloroplast. The catalysed reaction is GTP + 4 H2O = 2,5-diamino-6-hydroxy-4-(5-phosphoribosylamino)-pyrimidine + formate + 2 phosphate + 3 H(+). It functions in the pathway cofactor biosynthesis; riboflavin biosynthesis; 5-amino-6-(D-ribitylamino)uracil from GTP: step 1/4. Involved in riboflavin biosynthesis. Catalyzes the conversion of GTP to 2,5-diamino-6-ribosylamino-4(3H)-pyrimidinone 5'-phosphate (DARP), formate and pyrophosphate. The chain is Probable monofunctional riboflavin biosynthesis protein RIBA 3, chloroplastic (RIBA3) from Oryza sativa subsp. japonica (Rice).